A 101-amino-acid chain; its full sequence is uncharacterized protein (101 aa).

This is an uncharacterized protein from Bacillus subtilis (strain 168).